A 313-amino-acid polypeptide reads, in one-letter code: uncharacterized protein (313 aa).

6 consecutive transmembrane segments (helical) span residues 16 to 36, 106 to 126, 155 to 175, 208 to 228, 233 to 253, and 286 to 306; these read AGTW…AFLA, FTIL…ANEF, FGLL…LIFF, LSES…SAVF, LAVG…AFIA, and FSLV…FGIF.

It localises to the cell membrane. This is an uncharacterized protein from Bacillus subtilis (strain 168).